Reading from the N-terminus, the 317-residue chain is Sperm acrosome membrane-associated protein 6 (317 aa).

Residues 1-18 form the signal peptide; that stretch reads MFVFIAKLLIFSSVITSA. Residues 19-281 lie on the Extracellular side of the membrane; it reads FTCYQCFIDE…PSFSFWLPRP (263 aa). Cystine bridges form between Cys21–Cys143, Cys24–Cys146, Cys35–Cys51, Cys128–Cys151, and Cys132–Cys157. Residue Asn29 is glycosylated (N-linked (GlcNAc...) asparagine). One can recognise an Ig-like domain in the interval 123-237; that stretch reads PRVSGCLPPC…EVLSQEQSLV (115 aa). Asn168 carries an N-linked (GlcNAc...) asparagine glycan. Cys174 and Cys227 are joined by a disulfide. Residues 282 to 302 form a helical membrane-spanning segment; the sequence is ALLITCLTATMLLIFLSLGAM. Topologically, residues 303–317 are cytoplasmic; the sequence is CRLWYQIRTNVSNPA.

The protein belongs to the SPACA6 family. Forms a complex with izumo1 and tmem81 on spermatocyte cell membrane. The complex binds to oocyte protein bncr. Expressed in testis.

Its subcellular location is the cytoplasmic vesicle. The protein localises to the secretory vesicle. The protein resides in the acrosome membrane. In terms of biological role, sperm protein required for fusion of sperm with the egg membrane during fertilization. May regulate the expression of sperm surface protein DCST2. In Danio rerio (Zebrafish), this protein is Sperm acrosome membrane-associated protein 6.